The following is a 397-amino-acid chain: MTLNRTIRCFAAGAAFIVFAAQPALAQAPGGATPPPPQVFVVDIKPHDVPVTYEYAARINAYRNVQVRARVGGILLHRNFVEGTQVKAGEVLFEIDPAPYQAELEKAQAQVAQAEAQYQQSIRDAERAEQLVQQKVQSAAVRDSAFATRDLNKAAVAAAKAQLRTAELNLSYTKVTAPISGITSQEQVNEGSLIGTDASSSLLTSVTQLDPVYVNFSFTDTEAAEIAKLRAERGATGEDADRLKIKILFGDGKAYDHEGTIDFTSSSLDTETGTLGVRAVVENPNHRLIPGQFVRAEILDIQVKDAITVPKAALMQSAQGQFVYVVNKDNVVEVRPVTGARELKNDWLISQGLNSGDRVITEGVIKAVPGRPVQPVVQGVDDKAQAEAGKEQAADKK.

Residues 1–26 (MTLNRTIRCFAAGAAFIVFAAQPALA) form the signal peptide. A coiled-coil region spans residues 98–139 (APYQAELEKAQAQVAQAEAQYQQSIRDAERAEQLVQQKVQSA).

The protein belongs to the membrane fusion protein (MFP) (TC 8.A.1) family. Probably part of a tripartite efflux pump, which is composed of an outer membrane efflux protein, an inner membrane protein and a protein that expands the periplasmic space. Could form a tripartite pump with BepC and BepE.

Its subcellular location is the periplasm. Its function is as follows. Involved in resistance to several unrelated toxic compounds, such as dyes, detergents and antibiotics. The polypeptide is Efflux pump periplasmic linker BepD (bepD) (Brucella suis biovar 1 (strain 1330)).